The sequence spans 202 residues: Peptidyl-tRNA hydrolase (202 aa).

Position 17 (Tyr17) interacts with tRNA. The active-site Proton acceptor is His22. Residues Phe76, Asn78, and Asn124 each coordinate tRNA.

It belongs to the PTH family. Monomer.

Its subcellular location is the cytoplasm. The enzyme catalyses an N-acyl-L-alpha-aminoacyl-tRNA + H2O = an N-acyl-L-amino acid + a tRNA + H(+). Hydrolyzes ribosome-free peptidyl-tRNAs (with 1 or more amino acids incorporated), which drop off the ribosome during protein synthesis, or as a result of ribosome stalling. Its function is as follows. Catalyzes the release of premature peptidyl moieties from peptidyl-tRNA molecules trapped in stalled 50S ribosomal subunits, and thus maintains levels of free tRNAs and 50S ribosomes. The protein is Peptidyl-tRNA hydrolase of Nitratidesulfovibrio vulgaris (strain DSM 19637 / Miyazaki F) (Desulfovibrio vulgaris).